A 257-amino-acid polypeptide reads, in one-letter code: Global transcriptional regulator CodY (257 aa).

The tract at residues 1-155 is GAF domain; sequence MSLLSKTREL…AATVLGMEIL (155 aa). Positions 203-222 form a DNA-binding region, H-T-H motif; that stretch reads ASKVADRVGITRSVIVNALR.

The protein belongs to the CodY family.

The protein localises to the cytoplasm. Its function is as follows. DNA-binding global transcriptional regulator which is involved in the adaptive response to starvation and acts by directly or indirectly controlling the expression of numerous genes in response to nutrient availability. During rapid exponential growth, CodY is highly active and represses genes whose products allow adaptation to nutrient depletion. This Staphylococcus carnosus (strain TM300) protein is Global transcriptional regulator CodY.